The sequence spans 492 residues: T-box transcription factor TBX5-A (492 aa).

The interval 1–43 (MADSEDTFRLQNSPSDSEPKDLQNEGKSDKQNAAVSKSPSSQT) is disordered. Residues 17 to 30 (SEPKDLQNEGKSDK) are compositionally biased toward basic and acidic residues. The segment covering 31-43 (QNAAVSKSPSSQT) has biased composition (polar residues). Residues 62 to 237 (LWTKFHEVGT…NNPFAKGFRG (176 aa)) constitute a DNA-binding region (T-box). The interval 331-352 (AGEHPYKKPYVESSSSEDDHYY) is disordered.

As to quaternary structure, monomer. Homodimer (via the T-box); binds DNA as homodimer. Expressed in the dorsal optic cup of developing eye, pectoral fin buds and heart. At 31 hpf, when the pectoral fin buds have begun bulging outwards, restricted expression is detected throughout the mesenchyme of the early fin buds and these high levels of expression continue until later stages.

The protein localises to the nucleus. The protein resides in the cytoplasm. Its function is as follows. Required for pectoral fin formation. Together with tbx5b, involved in eye and heart development. Required for the looping stage of heart development. May bind to the core DNA motif of promoters. This is T-box transcription factor TBX5-A (tbx5a) from Danio rerio (Zebrafish).